Reading from the N-terminus, the 501-residue chain is Suppressor of hairless protein homolog (501 aa).

3 DNA-binding regions span residues 58 to 68 (QKSYGNEKRFF), 166 to 171 (SKPSKK), and 193 to 198 (RLRSQT). Residues 356 to 446 (PVVESLQLNG…YSTSLTFTYT (91 aa)) form the IPT/TIG domain.

Belongs to the Su(H) family. Interacts with activated Notch proteins. Forms a ternary complex with nrarp and the intracellular domain (NICD) of notch1. Interacts with rita1, leading to nuclear export, prevent the interaction between rbpj and NICD product and subsequent down-regulation of the Notch signaling pathway.

Its subcellular location is the nucleus. The protein resides in the cytoplasm. Its function is as follows. Transcriptional regulator that plays a central role in Notch signaling, a signaling pathway involved in cell-cell communication that regulates a broad spectrum of cell-fate determinations. Acts as a transcriptional repressor when it is not associated with Notch proteins. When associated with some NICD product of Notch proteins (Notch intracellular domain), it acts as a transcriptional activator that activates transcription of Notch target genes. Required for the transcriptional activation of ESR1, suggesting that it is required during primary neurogenesis in embryos. Binds to the oxygen responsive element of COX4I2 and activates its transcription under hypoxia conditions (4% oxygen). This chain is Suppressor of hairless protein homolog (rbpj), found in Xenopus laevis (African clawed frog).